The sequence spans 245 residues: tRNA1(Val) (adenine(37)-N6)-methyltransferase (245 aa).

It belongs to the methyltransferase superfamily. tRNA (adenine-N(6)-)-methyltransferase family.

Its subcellular location is the cytoplasm. The catalysed reaction is adenosine(37) in tRNA1(Val) + S-adenosyl-L-methionine = N(6)-methyladenosine(37) in tRNA1(Val) + S-adenosyl-L-homocysteine + H(+). Specifically methylates the adenine in position 37 of tRNA(1)(Val) (anticodon cmo5UAC). This Escherichia coli O139:H28 (strain E24377A / ETEC) protein is tRNA1(Val) (adenine(37)-N6)-methyltransferase.